Here is a 151-residue protein sequence, read N- to C-terminus: Nucleoside diphosphate kinase (151 aa).

ATP contacts are provided by K10, F58, R86, T92, R103, and N113. H116 serves as the catalytic Pros-phosphohistidine intermediate.

This sequence belongs to the NDK family. As to quaternary structure, homotetramer. Requires Mg(2+) as cofactor.

Its subcellular location is the cytoplasm. The enzyme catalyses dZDP + ATP = dZTP + ADP. It catalyses the reaction a 2'-deoxyribonucleoside 5'-diphosphate + ATP = a 2'-deoxyribonucleoside 5'-triphosphate + ADP. The catalysed reaction is a ribonucleoside 5'-diphosphate + ATP = a ribonucleoside 5'-triphosphate + ADP. The protein operates within purine metabolism. In terms of biological role, major role in the synthesis of nucleoside triphosphates other than ATP. The ATP gamma phosphate is transferred to the NDP beta phosphate via a ping-pong mechanism, using a phosphorylated active-site intermediate. Functionally, (Microbial infection) Catalyzes the phosphorylation of dZDP to dZTP, when the bacterium is infected by a phage that produces the substrate for the synthesis of dZTP (2- amino-2'-deoxyadenosine 5'-triphosphate), which is then used by the phage as a DNA polymerase substrate. This is Nucleoside diphosphate kinase from Synechococcus sp. (strain CC9902).